The following is a 546-amino-acid chain: Aladin (546 aa).

An N-acetylcysteine modification is found at C2. S33 carries the post-translational modification Phosphoserine. WD repeat units lie at residues 142 to 180 (EFAQ…VYNA), 183 to 222 (TIVP…IWTL), 234 to 274 (GCAQ…VWDV), 280 to 316 (VPLP…VWEA), 324 to 380 (WPTL…IVAD), 386 to 433 (IQTP…LFRT), and 442 to 482 (LPCG…IAHI). Phosphoserine is present on residues S495, S511, S522, and S525. Residues 500–546 (RAQEPPAGGGGSIHDLPLFTETSPTSAPWDPLPGPPPVLPHSPHSHL) form a disordered region. Residues 529 to 539 (DPLPGPPPVLP) show a composition bias toward pro residues. Position 541 is a phosphoserine (S541). Positions 544–546 (SHL) match the Microbody targeting signal motif.

As to quaternary structure, interacts with NDC1, the interaction is required for nuclear pore localization. Interacts with the inactive form aurora kinase AURKA. Interacts with PGRMC2. In terms of tissue distribution, widely expressed. Particularly abundant in cerebellum, corpus callosum, adrenal gland, pituitary gland, gastrointestinal structures and fetal lung.

The protein localises to the nucleus. It is found in the nuclear pore complex. The protein resides in the cytoplasm. It localises to the cytoskeleton. Its subcellular location is the spindle pole. The protein localises to the nucleus envelope. Its function is as follows. Plays a role in the normal development of the peripheral and central nervous system. Required for the correct localization of aurora kinase AURKA and the microtubule minus end-binding protein NUMA1 as well as a subset of AURKA targets which ensures proper spindle formation and timely chromosome alignment. This Homo sapiens (Human) protein is Aladin (AAAS).